The sequence spans 243 residues: uncharacterized protein (243 aa).

Positions 1–19 (MKSLPLLGILAFAANRLSA) are cleaved as a signal peptide. Asn112 and Asn206 each carry an N-linked (GlcNAc...) asparagine glycan.

This is an uncharacterized protein from Encephalitozoon cuniculi (strain GB-M1) (Microsporidian parasite).